Consider the following 84-residue polypeptide: uncharacterized protein (84 aa).

This sequence belongs to the chlamydial CPn_0710/CT_666/TC_0037 family.

This is an uncharacterized protein from Chlamydia pneumoniae (Chlamydophila pneumoniae).